A 239-amino-acid chain; its full sequence is Ion-translocating oxidoreductase complex subunit E (239 aa).

5 helical membrane-spanning segments follow: residues 41-61, 71-91, 95-115, 130-150, and 184-204; these read LGLG…VSLV, LPAF…LMQA, ELYQ…VILG, SFDG…LGGL, and GFLL…LIAL.

The protein belongs to the NqrDE/RnfAE family. The complex is composed of six subunits: RnfA, RnfB, RnfC, RnfD, RnfE and RnfG.

Its subcellular location is the cell inner membrane. Its function is as follows. Part of a membrane-bound complex that couples electron transfer with translocation of ions across the membrane. This Pseudomonas paraeruginosa (strain DSM 24068 / PA7) (Pseudomonas aeruginosa (strain PA7)) protein is Ion-translocating oxidoreductase complex subunit E.